Consider the following 335-residue polypeptide: MSLDINQIALHQLIKRDEQTLELVLRDSLLEPTSTVTEMMAELHRVYSAKNKAYGMFNEESELAQSLRLQRQGEEDFLAFSRAATGRLRDELAKYPFADGGIVLFCQYRYLAVEYLLVTVLNNLSSMRVNEQLDISSTHYLDINHADIVARIDLTEWETNPESTRYLTFLKGRVGRKVSDFFMDFLGASEGLNAKAQNKGLLQALDDFTAEAQLDKSERQNVRQQVYSYCSEQLQAGEEIELESLSKELAGVSEVSFQEFTADKGYELEESFPADRSTLRQLTKFAGSGGGLTVNFDAMLLGERIFWDPATDTLTIKGTPPNLRDQLQRRTSGGK.

It belongs to the YejK family.

Its subcellular location is the cytoplasm. It is found in the nucleoid. This chain is Nucleoid-associated protein Ent638_2782, found in Enterobacter sp. (strain 638).